The following is a 528-amino-acid chain: Zinc finger protein 16-like (528 aa).

The segment at 1-28 (MSRKRNHCYMETGASSESQGAFVDSAGP) is disordered. Residues 79 to 106 (IRVLKMELREKSDEIELLKAKLESAEKD) adopt a coiled-coil conformation. 2 disordered regions span residues 159 to 202 (GAAE…TDAE) and 232 to 293 (FKGD…DRME). The segment covering 232 to 242 (FKGDSETKCED) has biased composition (basic and acidic residues). Over residues 244 to 256 (PPMDEEDENEDSE) the composition is skewed to acidic residues. 2 stretches are compositionally biased toward basic and acidic residues: residues 257-270 (EGRG…DHFP) and 278-293 (GEDR…DRME). A C2H2-type 1 zinc finger spans residues 303–326 (FICPFCGTLCPDSSFLEEHIKLMH). The segment covering 333–345 (QSTSAGSSSQAEG) has biased composition (low complexity). The tract at residues 333-359 (QSTSAGSSSQAEGDSGEAGPASRGARE) is disordered. 4 consecutive C2H2-type zinc fingers follow at residues 366-388 (YECG…QRIH), 394-416 (FVCP…RLSH), 423-445 (FPCP…QRVH), and 451-473 (YACP…MRIH). The C2H2-type 6; degenerate zinc-finger motif lies at 479–501 (YTCYQCGRSFRHLGTYKSHRCMP). Residues 502–528 (ATQMPSEHSPPWAQEDKVQTGRLQGYV) are disordered.

Belongs to the krueppel C2H2-type zinc-finger protein family.

The protein localises to the nucleus. Its function is as follows. Probable transcription factor. Important for development and migration of oligodendrocyte precursor cells, and normal myelination of axons in the central nervous system (CNS). Functions autonomously in oligodendrocytes to promote CNS myelination. Seems to act in parallel with notch3 during oligodendrocyte development. The sequence is that of Zinc finger protein 16-like from Danio rerio (Zebrafish).